The primary structure comprises 545 residues: Glutamyl-tRNA(Gln) amidotransferase subunit B-1, chloroplastic/mitochondrial (545 aa).

The protein belongs to the GatB/GatE family. GatB subfamily. As to quaternary structure, subunit of the heterotrimeric GatCAB amidotransferase (AdT) complex, composed of A, B and C subunits.

The protein resides in the mitochondrion. Its subcellular location is the plastid. The protein localises to the chloroplast. It catalyses the reaction L-glutamyl-tRNA(Gln) + L-glutamine + ATP + H2O = L-glutaminyl-tRNA(Gln) + L-glutamate + ADP + phosphate + H(+). In terms of biological role, allows the formation of correctly charged Gln-tRNA(Gln) through the transamidation of misacylated Glu-tRNA(Gln) in chloroplasts and mitochondria. The reaction takes place in the presence of glutamine and ATP through an activated gamma-phospho-Glu-tRNA(Gln). The protein is Glutamyl-tRNA(Gln) amidotransferase subunit B-1, chloroplastic/mitochondrial of Micromonas pusilla (strain CCMP1545) (Picoplanktonic green alga).